A 376-amino-acid polypeptide reads, in one-letter code: Glucose-1-phosphate adenylyltransferase (376 aa).

Residues tyrosine 101, glycine 166, 181–182, and serine 192 contribute to the alpha-D-glucose 1-phosphate site; that span reads EK.

The protein belongs to the bacterial/plant glucose-1-phosphate adenylyltransferase family. In terms of assembly, homotetramer.

The enzyme catalyses alpha-D-glucose 1-phosphate + ATP + H(+) = ADP-alpha-D-glucose + diphosphate. Its pathway is glycan biosynthesis; glycogen biosynthesis. Its function is as follows. Involved in the biosynthesis of ADP-glucose, a building block required for the elongation reactions to produce glycogen. Catalyzes the reaction between ATP and alpha-D-glucose 1-phosphate (G1P) to produce pyrophosphate and ADP-Glc. The polypeptide is Glucose-1-phosphate adenylyltransferase (Bacillus mycoides (strain KBAB4) (Bacillus weihenstephanensis)).